We begin with the raw amino-acid sequence, 621 residues long: MEHIRTTKVEQVKLLDRFSTSNKSLTGTLYLTATHLLFIDSHQKETWILHHHIASVEKLALTTSGCPLVIQCKNFRTVHFIVPRERDCHDIYNSLLQLSKQAKYEDLYAFSYNPKQNDSERLQGWQLIDLAEEYKRMGVPNSHWQLSDANRDYKICETYPRELYVPRIASKPIIVGSSKFRSKGRFPVLSYYHQDKEAAICRCSQPLSGFSARCLEDEHLLQAISKANPVNRYMYVMDTRPKLNAMANRAAGKGYENEDNYSNIRFQFVGIENIHVMRSSLQKLLEVNGTKGLSVNDFYSGLESSGWLRHIKAVMDAAIFLAKAITVENASVLVHCSDGWDRTSQVCSLGSLLLDSYYRTIKGFMVLIEKDWISFGHKFSERCGQLDGDPKEVSPVFTQFLECVWHLTEQFPQAFEFSEAFLLQIHEHIHSCQFGNFLGNCQKEREELKLKEKTYSLWPFLLEDQKKYLNPLYSSESHRFTVLEPNTVSFNFKFWRNMYHQFDRTLHPRQSVFNIIMNMNEQNKQLEKDIKDLESKIKQRKNKQTDGILTKELLHSVHPESPNLKTSLCFKEQTLLPVNDALRTIEGSSPADNRYSEYAEEFSKSEPAVVSLEYGVARMTC.

A GRAM domain is found at 1–101; it reads MEHIRTTKVE…YNSLLQLSKQ (101 aa). The interval 2 to 141 is interaction with RAB1B; the sequence is EHIRTTKVEQ…EEYKRMGVPN (140 aa). At Tyr108 the chain carries Phosphotyrosine. One can recognise a Myotubularin phosphatase domain in the interval 124–499; it reads GWQLIDLAEE…FNFKFWRNMY (376 aa). Residues Asn248, Asn273, and Ile274 each coordinate a 1,2-diacyl-sn-glycero-3-phospho-(1D-myo-inositol-3,5-bisphosphate). Asn248, Asn273, and Ile274 together coordinate a 1,2-diacyl-sn-glycero-3-phospho-(1D-myo-inositol-3-phosphate). The active-site Phosphocysteine intermediate is the Cys336. Residues Ser337, Asp338, Gly339, Trp340, Asp341, Arg342, Lys378, and Arg382 each contribute to the a 1,2-diacyl-sn-glycero-3-phospho-(1D-myo-inositol-3,5-bisphosphate) site. Positions 337, 338, 339, 340, 341, and 342 each coordinate a 1,2-diacyl-sn-glycero-3-phospho-(1D-myo-inositol-3-phosphate). Position 382 (Arg382) interacts with a 1,2-diacyl-sn-glycero-3-phospho-(1D-myo-inositol-3-phosphate). Ser556, Ser561, Ser589, and Ser611 each carry phosphoserine.

The protein belongs to the protein-tyrosine phosphatase family. Non-receptor class myotubularin subfamily. Homodimer. Heterodimer (via C-terminus) with MTMR9 (via C-terminus). Interacts with ALKBH4. Interacts with KCNN4. Interacts (via GRAM domain) with RAB1B (in GDP-bound form); the interaction regulates MTMR6 recruitment to the endoplasmic reticulum-Golgi intermediate compartment. In terms of tissue distribution, expressed in CD4+ T-cells.

The protein resides in the cytoplasm. Its subcellular location is the endoplasmic reticulum-Golgi intermediate compartment. The protein localises to the endoplasmic reticulum. It is found in the cell projection. It localises to the ruffle membrane. The protein resides in the perinuclear region. It catalyses the reaction a 1,2-diacyl-sn-glycero-3-phospho-(1D-myo-inositol-3,5-bisphosphate) + H2O = a 1,2-diacyl-sn-glycero-3-phospho-(1D-myo-inositol-5-phosphate) + phosphate. The enzyme catalyses a 1,2-diacyl-sn-glycero-3-phospho-(1D-myo-inositol-3-phosphate) + H2O = a 1,2-diacyl-sn-glycero-3-phospho-(1D-myo-inositol) + phosphate. It carries out the reaction 1,2-dioctanoyl-sn-glycero-3-phospho-(1D-myo-inositol-3,5-bisphosphate) + H2O = 1,2-dioctanoyl-sn-glycero-3-phospho-(1D-myo-inositol-5-phosphate) + phosphate. The catalysed reaction is 1,2-dioctanoyl-sn-glycero-3-phospho-(1-D-myo-inositol-3-phosphate) + H2O = 1,2-dioctanoyl-sn-glycero-3-phospho-(1D-myo-inositol) + phosphate. Its activity is regulated as follows. Allosterically activated by phosphatidylserine and/or phosphatidylinositol 4-phosphate (PtdIns(4)P), and phosphatidylinositol 5-phosphate (PtdIns(5)P). Interaction with MTMR9 increases catalytic activity towards phosphatidylinositol 3,5-bisphosphate. Its function is as follows. Lipid phosphatase that specifically dephosphorylates the D-3 position of phosphatidylinositol 3-phosphate and phosphatidylinositol 3,5-bisphosphate, generating phosphatidylinositol and phosphatidylinositol 5-phosphate. Binds with high affinity to phosphatidylinositol 3,5-bisphosphate (PtdIns(3,5)P2) but also to phosphatidylinositol 3-phosphate (PtdIns(3)P), phosphatidylinositol 4-phosphate (PtdIns(4)P), and phosphatidylinositol 5-phosphate (PtdIns(5)P), phosphatidic acid and phosphatidylserine. Negatively regulates ER-Golgi protein transport. Probably in association with MTMR9, plays a role in the late stages of macropinocytosis by dephosphorylating phosphatidylinositol 3-phosphate in membrane ruffles. Acts as a negative regulator of KCNN4/KCa3.1 channel activity in CD4(+) T-cells possibly by decreasing intracellular levels of phosphatidylinositol 3-phosphate. Negatively regulates proliferation of reactivated CD4(+) T-cells. In complex with MTMR9, negatively regulates DNA damage-induced apoptosis. The formation of the MTMR6-MTMR9 complex stabilizes both MTMR6 and MTMR9 protein levels. This is Phosphatidylinositol-3,5-bisphosphate 3-phosphatase MTMR6 from Homo sapiens (Human).